Here is a 393-residue protein sequence, read N- to C-terminus: Asparagine--oxo-acid transaminase (393 aa).

L-asparagine is bound by residues Gly39, Trp126, and Asn176. Lys239 bears the N6-(pyridoxal phosphate)lysine mark. Arg370 contributes to the L-asparagine binding site.

This sequence belongs to the class-I pyridoxal-phosphate-dependent aminotransferase family. Pyridoxal 5'-phosphate is required as a cofactor.

It catalyses the reaction a 2-oxocarboxylate + L-asparagine = 2-oxosuccinamate + an L-alpha-amino acid. The catalysed reaction is L-asparagine + 2-oxoglutarate = 2-oxosuccinamate + L-glutamate. Catalyzes the transamination reaction between L-asparagine and 2-oxoglutarate to produce L-glutamate and 2-oxosuccinamate. Is not active with pyruvate as amine acceptor. May also use other amino acids as substrates. This Streptococcus mutans serotype c (strain ATCC 700610 / UA159) protein is Asparagine--oxo-acid transaminase.